A 387-amino-acid chain; its full sequence is S-adenosylmethionine synthase (387 aa).

Residue His-16 coordinates ATP. Asp-18 is a Mg(2+) binding site. Residue Glu-44 participates in K(+) binding. The L-methionine site is built by Glu-57 and Gln-100. The interval 100–110 is flexible loop; that stretch reads QSPDIAQGVDR. Residues 167–169, 232–233, Asp-241, 247–248, Ala-264, and Lys-268 each bind ATP; these read DAK, RF, and RK. Asp-241 is an L-methionine binding site. Lys-272 is a binding site for L-methionine.

Belongs to the AdoMet synthase family. As to quaternary structure, homotetramer; dimer of dimers. Requires Mg(2+) as cofactor. The cofactor is K(+).

Its subcellular location is the cytoplasm. It carries out the reaction L-methionine + ATP + H2O = S-adenosyl-L-methionine + phosphate + diphosphate. It participates in amino-acid biosynthesis; S-adenosyl-L-methionine biosynthesis; S-adenosyl-L-methionine from L-methionine: step 1/1. Catalyzes the formation of S-adenosylmethionine (AdoMet) from methionine and ATP. The overall synthetic reaction is composed of two sequential steps, AdoMet formation and the subsequent tripolyphosphate hydrolysis which occurs prior to release of AdoMet from the enzyme. The protein is S-adenosylmethionine synthase of Cupriavidus metallidurans (strain ATCC 43123 / DSM 2839 / NBRC 102507 / CH34) (Ralstonia metallidurans).